A 264-amino-acid polypeptide reads, in one-letter code: Type III pantothenate kinase (264 aa).

Residue 6–13 (DVGNTNIK) participates in ATP binding. 108–111 (GSDR) is a binding site for substrate. The active-site Proton acceptor is D110. ATP is bound at residue T134.

Belongs to the type III pantothenate kinase family. Homodimer. It depends on NH4(+) as a cofactor. Requires K(+) as cofactor.

The protein resides in the cytoplasm. It carries out the reaction (R)-pantothenate + ATP = (R)-4'-phosphopantothenate + ADP + H(+). It participates in cofactor biosynthesis; coenzyme A biosynthesis; CoA from (R)-pantothenate: step 1/5. In terms of biological role, catalyzes the phosphorylation of pantothenate (Pan), the first step in CoA biosynthesis. The sequence is that of Type III pantothenate kinase from Ehrlichia canis (strain Jake).